The sequence spans 516 residues: Bifunctional purine biosynthesis protein PurH (516 aa).

The MGS-like domain maps to 1 to 149 (MSERQPIRRA…KNHANVAVLT (149 aa)).

This sequence belongs to the PurH family.

The enzyme catalyses (6R)-10-formyltetrahydrofolate + 5-amino-1-(5-phospho-beta-D-ribosyl)imidazole-4-carboxamide = 5-formamido-1-(5-phospho-D-ribosyl)imidazole-4-carboxamide + (6S)-5,6,7,8-tetrahydrofolate. It carries out the reaction IMP + H2O = 5-formamido-1-(5-phospho-D-ribosyl)imidazole-4-carboxamide. It functions in the pathway purine metabolism; IMP biosynthesis via de novo pathway; 5-formamido-1-(5-phospho-D-ribosyl)imidazole-4-carboxamide from 5-amino-1-(5-phospho-D-ribosyl)imidazole-4-carboxamide (10-formyl THF route): step 1/1. Its pathway is purine metabolism; IMP biosynthesis via de novo pathway; IMP from 5-formamido-1-(5-phospho-D-ribosyl)imidazole-4-carboxamide: step 1/1. This Cutibacterium acnes (strain DSM 16379 / KPA171202) (Propionibacterium acnes) protein is Bifunctional purine biosynthesis protein PurH.